The sequence spans 703 residues: RING finger protein 214 (703 aa).

Disordered stretches follow at residues 1-59 (MAAS…TITK), 104-134 (GSQS…VTRS), and 146-197 (SRNC…SSSL). At Ala-2 the chain carries N-acetylalanine. 4 positions are modified to phosphoserine: Ser-15, Ser-40, Ser-47, and Ser-54. Residues 37 to 59 (TKDSAQKQKNSPLLSVSSQTITK) are compositionally biased toward polar residues. Phosphoserine is present on residues Ser-176 and Ser-196. Positions 220-379 (QDIEKNLDKM…AEKEAELHLT (160 aa)) form a coiled coil. The segment at 486–552 (FPILNPALSQ…SAETPRPQPV (67 aa)) is disordered. Residues 493–504 (LSQPSQPSSPLP) are compositionally biased toward low complexity. Phosphoserine occurs at positions 497, 511, and 516. The span at 523–536 (PHMPPAASIPPPPG) shows a compositional bias: pro residues. The segment at 658-700 (CLMCQKLVQPSELHPMACTHVLHKECIKFWAQTNTNDTCPFCP) adopts an RING-type; atypical zinc-finger fold.

The protein is RING finger protein 214 (RNF214) of Homo sapiens (Human).